A 397-amino-acid chain; its full sequence is Proteinase-activated receptor 2 (397 aa).

Positions 1–25 (MRSLSLAWLLGGITLLAASASCNRT) are cleaved as a signal peptide. A glycan (N-linked (GlcNAc...) asparagine) is linked at N23. Residues 26-36 (VNAPGPNSKGR) constitute a propeptide, removed for receptor activation. Residues 37–71 (SLIGRLDTPPPITGKGAPVEPGFSVDEFSASVLTG) lie on the Extracellular side of the membrane. A helical membrane pass occupies residues 72–101 (KLTTVFLPVIYIIVFVIGLPSNGMALWVFF). The Cytoplasmic segment spans residues 102-108 (FRTKKKH). Residues 109–137 (PAVIYMANLALADLLSVIWFPLKISYHLH) form a helical membrane-spanning segment. Topologically, residues 138–149 (GNDWTYGDALCK) are extracellular. Cysteines 148 and 226 form a disulfide. A helical transmembrane segment spans residues 150–177 (VLIGFFYGNMYCSILFMTCLSVQRYWVI). The Cytoplasmic portion of the chain corresponds to 178-183 (VNPMGH). The chain crosses the membrane as a helical span at residues 184-211 (SRKRANIAVGVSLAIWLLIFLVTIPLYV). At 212-235 (MRQTIYIPALNITTCHDVLPEEVL) the chain is on the extracellular side. A glycan (N-linked (GlcNAc...) asparagine) is linked at N222. Residues 236 to 269 (VGDMFSYFLSLAIGVFLFPALLTASAYVLMIKTL) traverse the membrane as a helical segment. Residues 270-277 (RSSAMDEH) are Cytoplasmic-facing. A helical membrane pass occupies residues 278–317 (SEKKRRRAIRLIITVLSMYFICFAPSNVLLVVHYFLIKSQ). The Extracellular portion of the chain corresponds to 318–323 (RQSHVY). A helical membrane pass occupies residues 324–347 (ALYLVALCLSTLNSCIDPFVYYFV). Topologically, residues 348–397 (SKDFRDQARNALLCRSVRTVKRMQISLTSNKFSRKSSSYSSSSTSVKTSY) are cytoplasmic. The S-palmitoyl cysteine moiety is linked to residue C361.

This sequence belongs to the G-protein coupled receptor 1 family. Interacts with TLR4, COPS5 and TMED2. Interacts with GNAQ, GNA11, GNA12, GNA13 and GNA14. In terms of processing, a proteolytic cleavage generates a new N-terminus that functions as a tethered ligand. Activating serine proteases include trypsin, mast cell tryptase, coagulation factors VII and Xa, myeloblastin/PRTN3 and membrane-type serine protease 1/ST14. Proposed subsequent cleavage by serine proteases is leading to receptor deactivation and include neutrophil elastase and cathepsin G. At least in part, implicated proteases are also shown to activate the receptor; the glycosylation status of the receptor is thought to contribute to the difference. Post-translationally, N-glycosylated and sialylated. Multiple phosphorylated on serine and threonine residues in the cytoplasmic region upon receptor activation; required for receptor desensitization and recruitment of beta-arrestin. In terms of processing, monoubiquitinated by Cbl at the plasma membrane and in early endosomes; not required for receptor endocytosis but for translocation to late endosomes or lysosomes. Deubiquitination involves Stambp and Usp8; required for lysosomal trafficking and receptor degradation.

Its subcellular location is the cell membrane. Its function is as follows. Receptor for trypsin and trypsin-like enzymes coupled to G proteins. Its function is mediated through the activation of several signaling pathways including phospholipase C (PLC), intracellular calcium, mitogen-activated protein kinase (MAPK), I-kappaB kinase/NF-kappaB and Rho. Can also be transactivated by cleaved F2R/PAR1. Involved in modulation of inflammatory responses and regulation of innate and adaptive immunity, and acts as a sensor for proteolytic enzymes generated during infection. Generally is promoting inflammation. Can signal synergistically with TLR4 and probably TLR2 in inflammatory responses and modulates Tlr3 signaling. Has a protective role in establishing the endothelial barrier; the activity involves coagulation factor X. Regulates endothelial cell barrier integrity during neutrophil extravasation, probably following proteolytic cleavage by PRTN3. Proposed to have a bronchoprotective role in airway epithelium, but also shown to compromise the airway epithelial barrier by interrupting E-cadherin adhesion. Involved in the regulation of vascular tone; activation results in hypotension presumably mediated by vasodilation. Associates with a subset of G proteins alpha subunits such as GNAQ, GNA11, GNA14, GNA12 and GNA13, but probably not with G(o)-alpha, G(i) subunit alpha-1 and G(i) subunit alpha-2. Believed to be a class B receptor which internalizes as a complex with arrestin and traffic with it to endosomal vesicles, presumably as desensitized receptor, for extended periods of time. Mediates inhibition of TNF-alpha stimulated JNK phosphorylation via coupling to G GNAQ and GNA11; the function involves dissociation of RIPK1 and Tradd from TNFR1. Mediates phosphorylation of nuclear factor NF-kappa-B RELA subunit at 'Ser-536'; the function involves Ikbkb and is predominantly independent of G proteins. Involved in cellular migration. Involved in cytoskeletal rearrangement and chemotaxis through beta-arrestin-promoted scaffolds; the function is independent of GNAQ and GNA11 and involves promotion of cofilin dephosphorylation and actin filament severing. Induces redistribution of COPS5 from the plasma membrane to the cytosol and activation of the JNK cascade is mediated by Cops5. Involved in the recruitment of leukocytes to the sites of inflammation and is the major PAR receptor capable of modulating eosinophil function such as pro-inflammatory cytokine secretion, superoxide production and degranulation. During inflammation promotes dendritic cell maturation, trafficking to the lymph nodes and subsequent T-cell activation. Involved in antimicrobial response of innate immune cells; activation enhances phagocytosis of Gram-positive and killing of Gram-negative bacteria. Acts synergistically with interferon-gamma in enhancing antiviral responses. Probably mediates activation of pro-inflammatory and pro-fibrotic responses in fibroblasts, triggered by coagulation factor Xa (F10). Probably mediates activation of barrier protective signaling responses in endothelial cells, triggered by coagulation factor Xa (F10). This chain is Proteinase-activated receptor 2 (F2rl1), found in Rattus norvegicus (Rat).